The following is an 823-amino-acid chain: MALFLEGTAASSAMETSNFAHVIFQNVGKSYLPHGALECHYTLTQFIKPHPKDWVGIFKVGWSTARDYYTFLWSPLPDNYTEGTAINRSVVFQGYYVPNDDGEFYQFCYVTHKGEIRGASTPFQFRANSPTEEELLTMEDEGGSDILVVTTKASYLEQKMEQIQQEKKELLENLDLLQKERDELIDEKNRLEKEYEQERESSAQLRKDVQELQLSAQSLQEEREEVKRRMEESTARLLQLEEDLIGVTQKGLQKETELDCLKDRVKKLNLEKEALEGQLKNEKDEKELYKIHLKNRELENTKLSAELQMLKSVDVNKENTIAQLKDELARVKSCLAEKEKQHRQLLANSSPSGESKALREQLRQKEEQLQATQQQANMLKAELRDSSNARDRSMAELYRIRVEAETLKKGQADARAECSRLEQQLEEMKSSTQQEAQCKESDVLAVAELQREVEDLRLRLQMAAEHYKDKYKECQKLQKQVVKFNEQQGVKRSPGSDAAAGPLSASPEASAPGSPSTSDAVLDAIIHGRLKSSSKELDKNDKYRKCKQMLNEERERCSMITDELTKMEVKLREQMKTNESLRMQLAAEEDRYKSQVAEKGRELKELKDSLFVLTKEKEKLEGQLQKSVNREEEQKDSNLDVQSVFLQYPMPYAQDDPSPLLVPQRPTDLLFGNPYSSTDSRDGADGEFSDDQMPRLPPVGPPSWDSNVVCIQPARNLSRPDGLEEPEEPQSTQNDDEPAAPEPAEFLNDGQMPFCFEPTGEQKRCPLCEVIFPPHYDQSKFEEHVESHWKICPMCSEQFPLDCDQQLFEKHVLTHFDSNVLNF.

A coiled-coil region spans residues 149 to 487 (VTTKASYLEQ…QKQVVKFNEQ (339 aa)). Disordered regions lie at residues 342-377 (HRQL…QQAN) and 486-519 (EQQG…STSD). The segment covering 356-368 (KALREQLRQKEEQ) has biased composition (basic and acidic residues). The segment covering 498–518 (AAAGPLSASPEASAPGSPSTS) has biased composition (low complexity). Positions 548–638 (QMLNEERERC…NREEEQKDSN (91 aa)) form a coiled coil. Positions 650-746 (MPYAQDDPSP…EPAAPEPAEF (97 aa)) are disordered. Acidic residues predominate over residues 723-739 (LEEPEEPQSTQNDDEPA). 2 consecutive UBZ1-type zinc fingers follow at residues 762–788 (QKRC…VESH) and 789–815 (WKIC…VLTH). The Zn(2+) site is built by Cys765, Cys768, His784, His788, Cys792, Cys795, His811, and His815.

Expressed at relatively high levels in both proximal and distal regions of the fin bud during pectoral fin development.

In terms of biological role, may have anti-apoptotic activity. In Danio rerio (Zebrafish), this protein is Tax1-binding protein 1 homolog B (tax1bp1b).